We begin with the raw amino-acid sequence, 590 residues long: Acetolactate synthase large subunit (590 aa).

Glu-61 contacts thiamine diphosphate. Residues Arg-163, 271 to 292, and 314 to 333 each bind FAD; these read HGTA…LGAR and DIDP…IVGD. The thiamine pyrophosphate binding stretch occupies residues 405 to 484; it reads QHQMWSAQFL…VKIIIINNRW (80 aa). Mg(2+) is bound by residues Asp-455 and Asn-482.

Belongs to the TPP enzyme family. In terms of assembly, dimer of large and small chains. It depends on Mg(2+) as a cofactor. Thiamine diphosphate serves as cofactor.

The protein resides in the plastid. It is found in the chloroplast. The enzyme catalyses 2 pyruvate + H(+) = (2S)-2-acetolactate + CO2. It participates in amino-acid biosynthesis; L-isoleucine biosynthesis; L-isoleucine from 2-oxobutanoate: step 1/4. It functions in the pathway amino-acid biosynthesis; L-valine biosynthesis; L-valine from pyruvate: step 1/4. This Pyropia yezoensis (Susabi-nori) protein is Acetolactate synthase large subunit (ilvB).